The following is a 193-amino-acid chain: Imidazoleglycerol-phosphate dehydratase (193 aa).

This sequence belongs to the imidazoleglycerol-phosphate dehydratase family.

Its subcellular location is the cytoplasm. The catalysed reaction is D-erythro-1-(imidazol-4-yl)glycerol 3-phosphate = 3-(imidazol-4-yl)-2-oxopropyl phosphate + H2O. It participates in amino-acid biosynthesis; L-histidine biosynthesis; L-histidine from 5-phospho-alpha-D-ribose 1-diphosphate: step 6/9. This Saccharolobus islandicus (strain Y.N.15.51 / Yellowstone #2) (Sulfolobus islandicus) protein is Imidazoleglycerol-phosphate dehydratase.